The primary structure comprises 156 residues: ATP synthase subunit b', chloroplastic (156 aa).

The chain crosses the membrane as a helical span at residues 24–44; the sequence is ATLPLVAIQFILLMVTLNIIL.

It belongs to the ATPase B chain family. F-type ATPases have 2 components, F(1) - the catalytic core - and F(0) - the membrane proton channel. F(1) has five subunits: alpha(3), beta(3), gamma(1), delta(1), epsilon(1). F(0) has four main subunits: a(1), b(1), b'(1) and c(10-14). The alpha and beta chains form an alternating ring which encloses part of the gamma chain. F(1) is attached to F(0) by a central stalk formed by the gamma and epsilon chains, while a peripheral stalk is formed by the delta, b and b' chains.

It localises to the plastid. It is found in the chloroplast thylakoid membrane. In terms of biological role, f(1)F(0) ATP synthase produces ATP from ADP in the presence of a proton or sodium gradient. F-type ATPases consist of two structural domains, F(1) containing the extramembraneous catalytic core and F(0) containing the membrane proton channel, linked together by a central stalk and a peripheral stalk. During catalysis, ATP synthesis in the catalytic domain of F(1) is coupled via a rotary mechanism of the central stalk subunits to proton translocation. Component of the F(0) channel, it forms part of the peripheral stalk, linking F(1) to F(0). The b'-subunit is a diverged and duplicated form of b found in plants and photosynthetic bacteria. This chain is ATP synthase subunit b', chloroplastic, found in Thalassiosira pseudonana (Marine diatom).